We begin with the raw amino-acid sequence, 672 residues long: Hydrogenase-4 component B (672 aa).

Residues 1–5 (MDALQ) are Periplasmic-facing. A helical transmembrane segment spans residues 6–26 (LLTWSLILYLFASLASLFLLG). The Cytoplasmic segment spans residues 27 to 30 (LDRL). Residues 31-51 (AIKLSGITSLVGGVIGIISGI) form a helical membrane-spanning segment. The Periplasmic portion of the chain corresponds to 52 to 79 (TQLHAGVTLVARFAPPFEFADLTLRMDS). A helical membrane pass occupies residues 80-100 (LSAFMVLVISLLVVVCSLYSL). Over 101–119 (TYMREYEGKGAAAMGFFMN) the chain is Cytoplasmic. Residues 120–140 (IFIASMVALLVMDNAFWFIVL) traverse the membrane as a helical segment. Topologically, residues 141-164 (FEMMSLSSWFLVIARQDKTSINAG) are periplasmic. A helical membrane pass occupies residues 165–185 (MLYFFIAHAGSVLIMIAFLLM). Topologically, residues 186–199 (GRESGSLDFASFRT) are cytoplasmic. Residues 200–220 (LSLSPGLASAVFLLAFFGFGA) form a helical membrane-spanning segment. The Periplasmic portion of the chain corresponds to 221-242 (KAGMMPLHSWLPRAHPAAPSHA). A helical membrane pass occupies residues 243–263 (SALMSGVMVKIGIFGILKVAM). At 264–272 (DLLAQTGLP) the chain is on the cytoplasmic side. A helical transmembrane segment spans residues 273-293 (LWWGILVMAIGAISALLGVLY). The Periplasmic portion of the chain corresponds to 294 to 311 (ALAEQDIKRLLAWSTVEN). The helical transmembrane segment at 312 to 332 (VGIILLAVGVAMVGLSLHDPL) threads the bilayer. Residues 333–342 (LTVVGLLGAL) lie on the Cytoplasmic side of the membrane. The chain crosses the membrane as a helical span at residues 343-363 (FHLLNHALFKGLLFLGAGAII). The Periplasmic segment spans residues 364 to 384 (SRLHTHDMEKMGALAKRMPWT). A helical transmembrane segment spans residues 385–405 (AAACLIGCLAISAIPPLNGFI). Residues 406-427 (SEWYTWQSLFSLSRVEAVALQL) lie on the Cytoplasmic side of the membrane. Residues 428 to 448 (AGPIAMVMLAVTGGLAVMCFV) form a helical membrane-spanning segment. At 449 to 474 (KMYGITFCGAPRSTHAEEAQEVPNTM) the chain is on the periplasmic side. The chain crosses the membrane as a helical span at residues 475 to 495 (IVAMLLLAALCVLIALSASWL). At 496–504 (APKIMHIAH) the chain is on the cytoplasmic side. The chain crosses the membrane as a helical span at residues 505–525 (AFTNTPPATVASGIALVPGTF). Residues 526–531 (HTQVTP) lie on the Periplasmic side of the membrane. The helical transmembrane segment at 532-552 (SLLLLLLLAMPLLPGLYWLWC) threads the bilayer. Topologically, residues 553–651 (RSRRAAFRRT…KEIQHLQSGD (99 aa)) are cytoplasmic. Residues 652–672 (FRLYCLYVVAALVVLLIAIAV) traverse the membrane as a helical segment.

The protein belongs to the complex I subunit 5 family.

It localises to the cell inner membrane. In terms of biological role, possible component of hydrogenase 4. The chain is Hydrogenase-4 component B from Escherichia coli (strain K12).